We begin with the raw amino-acid sequence, 371 residues long: Probable trehalose-phosphate phosphatase 1 (371 aa).

This sequence belongs to the trehalose phosphatase family. A divalent metal cation serves as cofactor. Expressed in roots and shoots.

The catalysed reaction is alpha,alpha-trehalose 6-phosphate + H2O = alpha,alpha-trehalose + phosphate. It participates in glycan biosynthesis; trehalose biosynthesis. In terms of biological role, removes the phosphate from trehalose 6-phosphate to produce free trehalose. Trehalose accumulation in plant improves abiotic stress tolerance. In Oryza sativa subsp. japonica (Rice), this protein is Probable trehalose-phosphate phosphatase 1 (TPP1).